We begin with the raw amino-acid sequence, 121 residues long: Large ribosomal subunit protein uL18 (121 aa).

Belongs to the universal ribosomal protein uL18 family. In terms of assembly, part of the 50S ribosomal subunit; part of the 5S rRNA/L5/L18/L25 subcomplex. Contacts the 5S and 23S rRNAs.

Its function is as follows. This is one of the proteins that bind and probably mediate the attachment of the 5S RNA into the large ribosomal subunit, where it forms part of the central protuberance. In Mesomycoplasma hyopneumoniae (strain J / ATCC 25934 / NCTC 10110) (Mycoplasma hyopneumoniae), this protein is Large ribosomal subunit protein uL18.